Consider the following 290-residue polypeptide: Thymidylate synthase (290 aa).

DUMP-binding positions include Arg-27 and 152–153; that span reads RR. Residue Cys-172 is the Nucleophile of the active site. DUMP-binding positions include 192–195, Asn-203, and 233–235; these read RSAD and HVY. Residue Asp-195 participates in (6R)-5,10-methylene-5,6,7,8-tetrahydrofolate binding. Ala-289 serves as a coordination point for (6R)-5,10-methylene-5,6,7,8-tetrahydrofolate.

It belongs to the thymidylate synthase family. In terms of assembly, homodimer.

It carries out the reaction dUMP + (6R)-5,10-methylene-5,6,7,8-tetrahydrofolate = 7,8-dihydrofolate + dTMP. It participates in pyrimidine metabolism; dTTP biosynthesis. The polypeptide is Thymidylate synthase (TS) (Ateles).